The primary structure comprises 457 residues: Phosphomethylpyrimidine synthase (457 aa).

Substrate contacts are provided by residues Asn-80, Met-109, Tyr-139, His-175, 195–197, 236–239, and Glu-275; these read SRG and DSLR. Residue His-279 coordinates Zn(2+). Tyr-302 is a binding site for substrate. Residue His-343 participates in Zn(2+) binding. [4Fe-4S] cluster-binding residues include Cys-423, Cys-426, and Cys-431.

The protein belongs to the ThiC family. [4Fe-4S] cluster serves as cofactor.

It catalyses the reaction 5-amino-1-(5-phospho-beta-D-ribosyl)imidazole + S-adenosyl-L-methionine = 4-amino-2-methyl-5-(phosphooxymethyl)pyrimidine + CO + 5'-deoxyadenosine + formate + L-methionine + 3 H(+). It participates in cofactor biosynthesis; thiamine diphosphate biosynthesis. In terms of biological role, catalyzes the synthesis of the hydroxymethylpyrimidine phosphate (HMP-P) moiety of thiamine from aminoimidazole ribotide (AIR) in a radical S-adenosyl-L-methionine (SAM)-dependent reaction. The sequence is that of Phosphomethylpyrimidine synthase from Nostoc punctiforme (strain ATCC 29133 / PCC 73102).